The primary structure comprises 266 residues: Glutamate racemase (266 aa).

Substrate is bound by residues 9 to 10 and 41 to 42; these read DS and YG. Cysteine 72 acts as the Proton donor/acceptor in catalysis. 73 to 74 contributes to the substrate binding site; the sequence is NT. Cysteine 183 acts as the Proton donor/acceptor in catalysis. 184 to 185 contributes to the substrate binding site; it reads TH.

This sequence belongs to the aspartate/glutamate racemases family.

The enzyme catalyses L-glutamate = D-glutamate. It functions in the pathway cell wall biogenesis; peptidoglycan biosynthesis. Provides the (R)-glutamate required for cell wall biosynthesis. The chain is Glutamate racemase from Listeria monocytogenes serotype 4b (strain CLIP80459).